Here is a 1358-residue protein sequence, read N- to C-terminus: DNA-directed RNA polymerase subunit beta (1358 aa).

The protein belongs to the RNA polymerase beta chain family. The RNAP catalytic core consists of 2 alpha, 1 beta, 1 beta' and 1 omega subunit. When a sigma factor is associated with the core the holoenzyme is formed, which can initiate transcription.

It catalyses the reaction RNA(n) + a ribonucleoside 5'-triphosphate = RNA(n+1) + diphosphate. Functionally, DNA-dependent RNA polymerase catalyzes the transcription of DNA into RNA using the four ribonucleoside triphosphates as substrates. The protein is DNA-directed RNA polymerase subunit beta of Azotobacter vinelandii (strain DJ / ATCC BAA-1303).